The primary structure comprises 598 residues: Peroxisomal multifunctional enzyme type 2 (598 aa).

Residues 1–309 form a (3R)-hydroxyacyl-CoA dehydrogenase region; the sequence is MSSSDGKLRY…LEVLEKLKEG (309 aa). NAD(+) is bound by residues 16–40, leucine 24, aspartate 43, 78–79, and asparagine 102; these read VVTG…AKVV and SV. Serine 154 lines the substrate pocket. Tyrosine 167 acts as the Proton acceptor in catalysis. NAD(+) contacts are provided by residues 167-171 and 199-202; these read YTAAK and AASR. The enoyl-CoA hydratase 2 stretch occupies residues 310 to 598; it reads GGDAIEDAFE…VDLKSSQAKL (289 aa). (3R)-3-hydroxydecanoyl-CoA-binding positions include 390–391, lysine 419, 496–501, glycine 519, and phenylalanine 549; these read HG and DKNPLH. One can recognise a MaoC-like domain in the interval 469 to 586; the sequence is PAPNRQPDAT…VETGKEVISG (118 aa). The short motif at 596–598 is the Microbody targeting signal element; it reads AKL.

This sequence belongs to the short-chain dehydrogenases/reductases (SDR) family. Homodimer.

It localises to the peroxisome. The enzyme catalyses a (3R)-3-hydroxyacyl-CoA + NAD(+) = a 3-oxoacyl-CoA + NADH + H(+). The catalysed reaction is a (3R)-3-hydroxyacyl-CoA = a (2E)-enoyl-CoA + H2O. It participates in lipid metabolism; fatty acid beta-oxidation. Functionally, bifunctional enzyme acting on the peroxisomal beta-oxidation pathway for fatty acids. The protein is Peroxisomal multifunctional enzyme type 2 of Drosophila melanogaster (Fruit fly).